The following is a 483-amino-acid chain: NAD-dependent protein deacetylase SRT1 (483 aa).

The 244-residue stretch at 27–270 (PELLHKKIEE…MYMMNLRIPP (244 aa)) folds into the Deacetylase sirtuin-type domain. NAD(+) is bound by residues 53–57 (AGIST), 63–65 (DFR), and 114–117 (QNVD). H134 acts as the Proton acceptor in catalysis. The Zn(2+) site is built by C142, C145, C167, and C172. NAD(+) contacts are provided by residues 209-211 (GTS) and 235-237 (NLQ).

Belongs to the sirtuin family. Class IV subfamily. Zn(2+) is required as a cofactor.

The protein localises to the nucleus. The catalysed reaction is N(6)-acetyl-L-lysyl-[protein] + NAD(+) + H2O = 2''-O-acetyl-ADP-D-ribose + nicotinamide + L-lysyl-[protein]. Functionally, NAD-dependent protein deacetylase. Has deacetylase activity towards H3K9Ac. May have a function in the safeguard against genome instability and DNA damage to ensure plant cell growth. May negatively regulate metabolic signal transduction involving methanol and jasmonates during leaf senescence. Required for histone H3K9Ac deacetylation and repression of AP2-1/RSR1 and amylase genes during early seed development. Functions as an epigenetic regulator to repress the expression of glycolytic genes and glycolysis in seedlings. Reduces lysine acetylation of the glycolytic glyceraldehyde-3-phosphate dehydrogenase (GAPDH), which is found to also function as an activator of glycolytic gene expression. This is NAD-dependent protein deacetylase SRT1 from Oryza sativa subsp. indica (Rice).